The following is a 466-amino-acid chain: L-seryl-tRNA(Sec) selenium transferase (466 aa).

Lys-293 carries the post-translational modification N6-(pyridoxal phosphate)lysine.

The protein belongs to the SelA family. The cofactor is pyridoxal 5'-phosphate.

It localises to the cytoplasm. The catalysed reaction is L-seryl-tRNA(Sec) + selenophosphate + H(+) = L-selenocysteinyl-tRNA(Sec) + phosphate. It functions in the pathway aminoacyl-tRNA biosynthesis; selenocysteinyl-tRNA(Sec) biosynthesis; selenocysteinyl-tRNA(Sec) from L-seryl-tRNA(Sec) (bacterial route): step 1/1. In terms of biological role, converts seryl-tRNA(Sec) to selenocysteinyl-tRNA(Sec) required for selenoprotein biosynthesis. The polypeptide is L-seryl-tRNA(Sec) selenium transferase (Desulfotalea psychrophila (strain LSv54 / DSM 12343)).